Reading from the N-terminus, the 1096-residue chain is Carbamoyl phosphate synthase large chain (1096 aa).

Residues 1 to 402 form a carboxyphosphate synthetic domain region; it reads MPKRDDINSV…ALQKALRSLE (402 aa). The ATP site is built by arginine 129, arginine 169, glycine 175, glycine 176, glutamate 208, isoleucine 210, glutamate 215, glycine 241, valine 242, histidine 243, glutamine 285, and glutamate 299. The 196-residue stretch at 133–328 folds into the ATP-grasp 1 domain; the sequence is KDLVIESGAD…IAKIAAKLAI (196 aa). Glutamine 285, glutamate 299, and asparagine 301 together coordinate Mg(2+). The Mn(2+) site is built by glutamine 285, glutamate 299, and asparagine 301. Positions 403–547 are oligomerization domain; the sequence is KRGSSFHWGA…YSSYDSETEI (145 aa). Positions 548–950 are carbamoyl phosphate synthetic domain; the sequence is VPSDRRKVII…AFAKSQEAAF (403 aa). An ATP-grasp 2 domain is found at 676-870; sequence SGILDAAGLV…LAKAASLVMV (195 aa). Residues arginine 712, arginine 754, leucine 756, glutamate 761, glycine 786, isoleucine 787, histidine 788, serine 789, glutamine 829, and glutamate 841 each coordinate ATP. The Mg(2+) site is built by glutamine 829, glutamate 841, and asparagine 843. Mn(2+) is bound by residues glutamine 829, glutamate 841, and asparagine 843. One can recognise an MGS-like domain in the interval 951-1095; sequence GGLPLSGTVF…QDYAIAREAR (145 aa). Positions 951–1096 are allosteric domain; it reads GGLPLSGTVF…DYAIAREARR (146 aa).

Belongs to the CarB family. In terms of assembly, composed of two chains; the small (or glutamine) chain promotes the hydrolysis of glutamine to ammonia, which is used by the large (or ammonia) chain to synthesize carbamoyl phosphate. Tetramer of heterodimers (alpha,beta)4. Mg(2+) serves as cofactor. The cofactor is Mn(2+).

The enzyme catalyses hydrogencarbonate + L-glutamine + 2 ATP + H2O = carbamoyl phosphate + L-glutamate + 2 ADP + phosphate + 2 H(+). The catalysed reaction is hydrogencarbonate + NH4(+) + 2 ATP = carbamoyl phosphate + 2 ADP + phosphate + 2 H(+). It participates in amino-acid biosynthesis; L-arginine biosynthesis; carbamoyl phosphate from bicarbonate: step 1/1. It functions in the pathway pyrimidine metabolism; UMP biosynthesis via de novo pathway; (S)-dihydroorotate from bicarbonate: step 1/3. Its function is as follows. Large subunit of the glutamine-dependent carbamoyl phosphate synthetase (CPSase). CPSase catalyzes the formation of carbamoyl phosphate from the ammonia moiety of glutamine, carbonate, and phosphate donated by ATP, constituting the first step of 2 biosynthetic pathways, one leading to arginine and/or urea and the other to pyrimidine nucleotides. The large subunit (synthetase) binds the substrates ammonia (free or transferred from glutamine from the small subunit), hydrogencarbonate and ATP and carries out an ATP-coupled ligase reaction, activating hydrogencarbonate by forming carboxy phosphate which reacts with ammonia to form carbamoyl phosphate. This chain is Carbamoyl phosphate synthase large chain, found in Clavibacter sepedonicus (Clavibacter michiganensis subsp. sepedonicus).